The following is a 151-amino-acid chain: Small ribosomal subunit protein uS11 (151 aa).

Residues 131-151 (DVTPVPSDSTRRKGGRRGRRL) form a disordered region. A compositionally biased stretch (basic residues) spans 142 to 151 (RKGGRRGRRL).

This sequence belongs to the universal ribosomal protein uS11 family.

The chain is Small ribosomal subunit protein uS11 from Bombyx mori (Silk moth).